The chain runs to 160 residues: Serine-protein kinase RsbW (160 aa).

Belongs to the anti-sigma-factor family.

It carries out the reaction L-seryl-[protein] + ATP = O-phospho-L-seryl-[protein] + ADP + H(+). The catalysed reaction is L-threonyl-[protein] + ATP = O-phospho-L-threonyl-[protein] + ADP + H(+). In terms of biological role, negative regulator of sigma-B activity. Phosphorylates and inactivates its specific antagonist protein, RsbV. Upon phosphorylation of RsbV, RsbW is released and binds to sigma-B, thereby blocking its ability to form an RNA polymerase holoenzyme (E-sigma-B). The sequence is that of Serine-protein kinase RsbW from Bacillus anthracis (strain A0248).